The following is a 134-amino-acid chain: Complexin-2 (134 aa).

The tract at residues 1–114 (MDFVMKQALG…CGDEDEEDEE (114 aa)) is disordered. Residues 15-85 (DMGKMLGGDE…EEKEAEEKAA (71 aa)) show a composition bias toward basic and acidic residues. Residues 29–84 (DAQKKEEERQEALRQQEDERKQKHIRMETEREKVRQQIRDKYGLKKKEEKEAEEKA) are a coiled coil.

This sequence belongs to the complexin/synaphin family. Binds to the SNARE core complex containing SNAP25, VAMP2 and STX1A. As to expression, nervous system. Present in electric organ (at protein level).

It localises to the cytoplasm. Its subcellular location is the cytosol. The protein localises to the presynapse. The protein resides in the nucleus. It is found in the perikaryon. Positively regulates a late step in synaptic vesicle exocytosis. This is Complexin-2 from Narke japonica (Japanese sleeper ray).